The chain runs to 122 residues: Large ribosomal subunit protein uL14c (122 aa).

It belongs to the universal ribosomal protein uL14 family. In terms of assembly, part of the 50S ribosomal subunit.

The protein localises to the plastid. It is found in the chloroplast. Functionally, binds to 23S rRNA. This chain is Large ribosomal subunit protein uL14c, found in Chlorokybus atmophyticus (Soil alga).